Here is a 185-residue protein sequence, read N- to C-terminus: Lipid A acyltransferase PagP (185 aa).

The signal sequence occupies residues 1–14 (MKLKPVLYLLMLLG). The N-palmitoyl cysteine moiety is linked to residue C15. C15 carries the S-diacylglycerol cysteine lipid modification. Residues H57, D100, and S101 contribute to the active site.

This sequence belongs to the lipid A palmitoyltransferase family. As to quaternary structure, homodimer.

It localises to the cell outer membrane. It catalyses the reaction a lipid A + a 1,2-diacyl-sn-glycero-3-phosphocholine = a hepta-acyl lipid A + a 2-acyl-sn-glycero-3-phosphocholine. The catalysed reaction is a lipid IVA + a 1,2-diacyl-sn-glycero-3-phosphocholine = a lipid IVB + a 2-acyl-sn-glycero-3-phosphocholine. It carries out the reaction a lipid IIA + a 1,2-diacyl-sn-glycero-3-phosphocholine = a lipid IIB + a 2-acyl-sn-glycero-3-phosphocholine. Functionally, transfers a fatty acid residue from the sn-1 position of a phospholipid to the N-linked hydroxyfatty acid chain on the proximal unit of lipid A or its precursors. In Erwinia sp. (strain Ejp617), this protein is Lipid A acyltransferase PagP.